We begin with the raw amino-acid sequence, 353 residues long: Nicotinate-nucleotide--dimethylbenzimidazole phosphoribosyltransferase (353 aa).

Glutamate 319 functions as the Proton acceptor in the catalytic mechanism.

It belongs to the CobT family.

The enzyme catalyses 5,6-dimethylbenzimidazole + nicotinate beta-D-ribonucleotide = alpha-ribazole 5'-phosphate + nicotinate + H(+). Its pathway is nucleoside biosynthesis; alpha-ribazole biosynthesis; alpha-ribazole from 5,6-dimethylbenzimidazole: step 1/2. Functionally, catalyzes the synthesis of alpha-ribazole-5'-phosphate from nicotinate mononucleotide (NAMN) and 5,6-dimethylbenzimidazole (DMB). The polypeptide is Nicotinate-nucleotide--dimethylbenzimidazole phosphoribosyltransferase (Syntrophobacter fumaroxidans (strain DSM 10017 / MPOB)).